We begin with the raw amino-acid sequence, 219 residues long: 2,3-bisphosphoglycerate-dependent phosphoglycerate mutase 2 (219 aa).

Substrate contacts are provided by residues 8-15, 21-22, Arg-58, 85-88, Lys-96, 112-113, and 156-157; these read RHGQSIWN, TG, ERHY, RR, and GN. His-9 functions as the Tele-phosphohistidine intermediate in the catalytic mechanism. The Proton donor/acceptor role is filled by Glu-85.

The protein belongs to the phosphoglycerate mutase family. BPG-dependent PGAM subfamily.

It carries out the reaction (2R)-2-phosphoglycerate = (2R)-3-phosphoglycerate. The protein operates within carbohydrate degradation; glycolysis; pyruvate from D-glyceraldehyde 3-phosphate: step 3/5. Functionally, catalyzes the interconversion of 2-phosphoglycerate and 3-phosphoglycerate. The chain is 2,3-bisphosphoglycerate-dependent phosphoglycerate mutase 2 from Gloeobacter violaceus (strain ATCC 29082 / PCC 7421).